The following is a 20-amino-acid chain: RGSXLTILPLRNIRDIFYVG.

Belongs to the peptidase A1 family. Post-translationally, N-glycosylated. In terms of tissue distribution, expressed in chorionic epithelium (trophectoderm).

It is found in the secreted. It localises to the extracellular space. In Bubalus bubalis (Domestic water buffalo), this protein is Pregnancy-associated glycoprotein 61C.